The following is a 438-amino-acid chain: Ammonium transporter Rh type A (438 aa).

Topologically, residues 1–4 (MRFK) are cytoplasmic. Residues 5-25 (FPLMAISLEVAMIVLFGLFVE) traverse the membrane as a helical segment. Residues 26-61 (YETPQNASQKNASHQNASQQGNTSSSAKKDQFFQLY) lie on the Extracellular side of the membrane. Residues asparagine 31, asparagine 36, asparagine 41, and asparagine 47 are each glycosylated (N-linked (GlcNAc...) asparagine). Residues 62–82 (PLFQDVHVMIFVGFGFLMTFL) traverse the membrane as a helical segment. Topologically, residues 83 to 86 (KKYG) are cytoplasmic. A helical membrane pass occupies residues 87-107 (FSGVGFNLFLAALGLQWGTIM). Residues 108 to 121 (QGLLHSHGKEFHFG) lie on the Extracellular side of the membrane. The helical transmembrane segment at 122-142 (IYNMINADFSTATVLISFGAV) threads the bilayer. Residues 143 to 148 (LGKTSP) are Cytoplasmic-facing. A helical transmembrane segment spans residues 149–169 (IQMLIMTILEIAVFAGNEYLV). Over 170–178 (TELFEASDT) the chain is Extracellular. Residues 179-199 (GASMTIHAFGAYFGLAVAGVL) traverse the membrane as a helical segment. The Cytoplasmic segment spans residues 200-218 (YRPGLRCEHPNDESVYHSD). The helical transmembrane segment at 219–239 (LFAMIGTLFLWIFWPSFNSAI) threads the bilayer. The Extracellular segment spans residues 240-249 (ADPGDHQYRA). Residues 250–270 (IVNTYMSLAACVITAYALSSL) form a helical membrane-spanning segment. Residues 271-278 (VERRGRLD) lie on the Cytoplasmic side of the membrane. A helical membrane pass occupies residues 279-296 (MVHIQNATLAGGVAVGTC). Residues 297–300 (ADME) are Extracellular-facing. The helical transmembrane segment at 301–321 (IPLYAAMTIGSIAGIISVLGY) threads the bilayer. At 322–342 (KFFSPLLANKLMIHDTCGVHN) the chain is on the cytoplasmic side. The chain crosses the membrane as a helical span at residues 343–363 (LHGLPGVFGGLASIVAISWGM). Residues 364-372 (STASMAMQA) are Extracellular-facing. The helical transmembrane segment at 373-393 (AALGSSIGSAIVGGLLTGLIL) threads the bilayer. The Cytoplasmic portion of the chain corresponds to 394 to 438 (KLPIWNQPPDEYCYDDSVSWKVPKFRELDNRFFQHANHNHVEHEV).

This sequence belongs to the ammonium transporter (TC 2.A.49) family. Rh subfamily. In terms of assembly, homodimer. Heterotrimer; a RHCE monomer interacts with a RHAG homodimer. Component of the ankyrin-1 complex in the erythrocyte, composed of ANK1, RHCE, RHAG, SLC4A1, EPB42, GYPA, GYPB and AQP1. Interacts with GYPB (via the N-terminal); this interaction bridges the (RHAG)2(RHCE) heterotrimer with the SLC4A1 Band 3 I dimer complexed with GYPA. Glycosylated.

The protein localises to the membrane. It carries out the reaction methylamine(out) = methylamine(in). The enzyme catalyses NH4(+)(in) = NH4(+)(out). It catalyses the reaction CO2(out) = CO2(in). Its function is as follows. Component of the ankyrin-1 complex, a multiprotein complex involved in the stability and shape of the erythrocyte membrane. Heterotrimer with RHCE (RHAG)2(RHCE), that transports ammonium and its related derivative methylammonium, in both neutral and ionic forms, across the erythrocyte membrane. The transport of NH4(+) is electrogenic and masks the NH3 transport. Also, may act as a CO2 channel. Moreover in erythrocyte, regulates RHD membrane expression and is associated with rhesus blood group antigen expression. The sequence is that of Ammonium transporter Rh type A from Mus musculus (Mouse).